The primary structure comprises 428 residues: Serine--tRNA ligase (428 aa).

231 to 233 provides a ligand contact to L-serine; it reads TAE. Residues 262–264 and valine 278 contribute to the ATP site; that span reads RRE. Residue glutamate 285 coordinates L-serine. ATP is bound at residue 349-352; it reads EVSS. Position 384 (serine 384) interacts with L-serine.

The protein belongs to the class-II aminoacyl-tRNA synthetase family. Type-1 seryl-tRNA synthetase subfamily. As to quaternary structure, homodimer. The tRNA molecule binds across the dimer.

It is found in the cytoplasm. It carries out the reaction tRNA(Ser) + L-serine + ATP = L-seryl-tRNA(Ser) + AMP + diphosphate + H(+). The enzyme catalyses tRNA(Sec) + L-serine + ATP = L-seryl-tRNA(Sec) + AMP + diphosphate + H(+). Its pathway is aminoacyl-tRNA biosynthesis; selenocysteinyl-tRNA(Sec) biosynthesis; L-seryl-tRNA(Sec) from L-serine and tRNA(Sec): step 1/1. In terms of biological role, catalyzes the attachment of serine to tRNA(Ser). Is also able to aminoacylate tRNA(Sec) with serine, to form the misacylated tRNA L-seryl-tRNA(Sec), which will be further converted into selenocysteinyl-tRNA(Sec). In Chlamydia trachomatis serovar A (strain ATCC VR-571B / DSM 19440 / HAR-13), this protein is Serine--tRNA ligase.